The sequence spans 442 residues: Meiotically up-regulated gene 191 protein (442 aa).

The residue at position 361 (threonine 361) is a Phosphothreonine. Positions 416-429 (RNNPSSGESTTLPQ) are enriched in polar residues. A disordered region spans residues 416–442 (RNNPSSGESTTLPQPSHGKKDKDCVIS). Over residues 433–442 (GKKDKDCVIS) the composition is skewed to basic and acidic residues.

The protein resides in the cytoplasm. It is found in the nucleus. In terms of biological role, has a role in meiosis. The chain is Meiotically up-regulated gene 191 protein (mug191) from Schizosaccharomyces pombe (strain 972 / ATCC 24843) (Fission yeast).